The chain runs to 285 residues: Guanylate kinase 2, chloroplastic/mitochondrial (285 aa).

Low complexity predominate over residues 1–19 (MLLTRRFSSALARSPLLPR). The transit peptide at 1–42 (MLLTRRFSSALARSPLLPRSLPPPRAVPATPPAPRPPPRRLM) directs the protein to the chloroplast and mitochondrion. A disordered region spans residues 1 to 66 (MLLTRRFSSA…PPPPSGADKD (66 aa)). Positions 20–36 (SLPPPRAVPATPPAPRP) are enriched in pro residues. Positions 40-50 (RLMSSSSSGWH) are enriched in low complexity. The region spanning 91-272 (PMILVISGPS…AVKQVESIID (182 aa)) is the Guanylate kinase-like domain. 98–105 (GPSGVGKD) contacts ATP. Residues Arg-130, Arg-224, and Arg-235 contribute to the active site. Asn-255 contributes to the ATP binding site.

Belongs to the guanylate kinase family. In terms of assembly, monomer.

The protein localises to the plastid. It localises to the chloroplast. It is found in the mitochondrion. It catalyses the reaction GMP + ATP = GDP + ADP. Essential for recycling GMP and indirectly, cGMP. Essential for chloroplast differentiation at early stage of leaf development. May not be involved in the synthesis and maintenance of the organellar DNA during leaf development. The polypeptide is Guanylate kinase 2, chloroplastic/mitochondrial (V2) (Oryza sativa subsp. japonica (Rice)).